Here is a 183-residue protein sequence, read N- to C-terminus: U3 small nucleolar ribonucleoprotein protein IMP3 (183 aa).

One can recognise an S4 RNA-binding domain in the interval 109–175 (RRLPVIMHRL…IKKTLLRYRN (67 aa)).

It belongs to the universal ribosomal protein uS4 family. In terms of assembly, component of a heterotrimeric complex containing IMP3, IMP4 and MPP10. Interacts with MPP10. Component of the ribosomal small subunit (SSU) processome composed of at least 40 protein subunits and snoRNA U3.

The protein resides in the nucleus. The protein localises to the nucleolus. In terms of biological role, required for the early cleavages at sites A0, A1 and A2 during 18S ribosomal pre-RNA processing. The protein is U3 small nucleolar ribonucleoprotein protein IMP3 (IMP3) of Saccharomyces cerevisiae (strain ATCC 204508 / S288c) (Baker's yeast).